Reading from the N-terminus, the 144-residue chain is uncharacterized protein (144 aa).

The 143-residue stretch at 2 to 144 folds into the N-acetyltransferase domain; it reads IELDAINPNN…EDSVLLSKKL (143 aa).

It belongs to the acetyltransferase family.

It is found in the cytoplasm. The protein resides in the nucleus. This is an uncharacterized protein from Schizosaccharomyces pombe (strain 972 / ATCC 24843) (Fission yeast).